Consider the following 508-residue polypeptide: Photosystem II CP47 reaction center protein (508 aa).

The next 6 helical transmembrane spans lie at 21–36 (SVHI…WAGS), 101–115 (IMFS…IWHW), 140–156 (GIHL…FGAF), 203–218 (IAAG…FHLS), 237–252 (VLSS…AFIV), and 457–472 (TFAL…HGAR).

The protein belongs to the PsbB/PsbC family. PsbB subfamily. PSII is composed of 1 copy each of membrane proteins PsbA, PsbB, PsbC, PsbD, PsbE, PsbF, PsbH, PsbI, PsbJ, PsbK, PsbL, PsbM, PsbT, PsbX, PsbY, PsbZ, Psb30/Ycf12, at least 3 peripheral proteins of the oxygen-evolving complex and a large number of cofactors. It forms dimeric complexes. Requires Binds multiple chlorophylls. PSII binds additional chlorophylls, carotenoids and specific lipids. as cofactor.

Its subcellular location is the plastid. The protein resides in the chloroplast thylakoid membrane. In terms of biological role, one of the components of the core complex of photosystem II (PSII). It binds chlorophyll and helps catalyze the primary light-induced photochemical processes of PSII. PSII is a light-driven water:plastoquinone oxidoreductase, using light energy to abstract electrons from H(2)O, generating O(2) and a proton gradient subsequently used for ATP formation. The polypeptide is Photosystem II CP47 reaction center protein (Pinus koraiensis (Korean pine)).